The sequence spans 155 residues: Calmodulin, flagellar (155 aa).

EF-hand domains are found at residues 14–49, 50–85, 87–122, and 123–155; these read EQIAEFKEAFSLFDKDGDGTITTSELGTVMRSLGQN, PTEAELHDMINEVDADGNGTIDFTEFLTMMAKKMKD, DNEEEIKEAFKVFDKDGNGFISAQELRHVMCNLGEK, and LTDEEVDEMIREADIDGDNQINYTEFVKMMMQK. Ca(2+) contacts are provided by Asp27, Asp29, Asp31, Thr33, Glu38, Asp63, Asp65, Asn67, Thr69, Glu74, Asp100, Asp102, Asn104, Glu111, Asp136, Asp138, Asp140, Gln142, and Glu147.

Belongs to the calmodulin family.

The protein localises to the cell projection. It localises to the cilium. The protein resides in the flagellum. Calmodulin mediates the control of a large number of enzymes, ion channels and other proteins by Ca(2+). Among the enzymes to be stimulated by the calmodulin-Ca(2+) complex are a number of protein kinases and phosphatases. The sequence is that of Calmodulin, flagellar (CAM1) from Naegleria gruberi (Amoeba).